The primary structure comprises 915 residues: Alanine--tRNA ligase (915 aa).

Zn(2+)-binding residues include His605, His609, Cys709, and His713. A disordered region spans residues 882–901 (GGGGDERLAQGGGRNPDGLT).

Belongs to the class-II aminoacyl-tRNA synthetase family. Zn(2+) is required as a cofactor.

The protein localises to the cytoplasm. The enzyme catalyses tRNA(Ala) + L-alanine + ATP = L-alanyl-tRNA(Ala) + AMP + diphosphate. Catalyzes the attachment of alanine to tRNA(Ala) in a two-step reaction: alanine is first activated by ATP to form Ala-AMP and then transferred to the acceptor end of tRNA(Ala). Also edits incorrectly charged Ser-tRNA(Ala) and Gly-tRNA(Ala) via its editing domain. The protein is Alanine--tRNA ligase of Methanopyrus kandleri (strain AV19 / DSM 6324 / JCM 9639 / NBRC 100938).